The chain runs to 163 residues: Beta-carbonic anhydrase 1 (163 aa).

Residues Cys35, Asp37, His88, and Cys91 each contribute to the Zn(2+) site.

The protein belongs to the beta-class carbonic anhydrase family. As to quaternary structure, homotetramer. Zn(2+) is required as a cofactor.

The enzyme catalyses hydrogencarbonate + H(+) = CO2 + H2O. In terms of biological role, catalyzes the reversible hydration of carbon dioxide to form bicarbonate. This Mycobacterium bovis (strain ATCC BAA-935 / AF2122/97) protein is Beta-carbonic anhydrase 1.